The following is a 98-amino-acid chain: Citrate lyase acyl carrier protein (98 aa).

O-(phosphoribosyl dephospho-coenzyme A)serine is present on Ser14.

This sequence belongs to the CitD family. As to quaternary structure, oligomer with a subunit composition of (alpha,beta,gamma)6.

The protein resides in the cytoplasm. In terms of biological role, covalent carrier of the coenzyme of citrate lyase. This chain is Citrate lyase acyl carrier protein, found in Shigella flexneri.